A 798-amino-acid chain; its full sequence is Bromodomain-containing protein 2 (798 aa).

Met-1 is subject to N-acetylmethionine. A disordered region spans residues 1–21; that stretch reads MLQNVTPHKLPGEGNAGLLGL. Thr-6 carries the phosphothreonine modification. Position 36 is a phosphoserine (Ser-36). The interval 53 to 72 is disordered; the sequence is LQLAPANPPPPEVSNPKKPG. Positions 73-179 constitute a Bromo 1 domain; the sequence is RVTNQLQYLH…KIFLQKVASM (107 aa). A protein-binding residues include Asp-111, Tyr-154, Asn-155, Lys-156, Asp-159, and Asp-160. Disordered regions lie at residues 267 to 348, 454 to 645, and 736 to 798; these read PPAQ…LSEQ, DEPL…YDEK, and KRLQ…SDSG. Positions 284-297 are enriched in low complexity; sequence TTTPTPTAILAPGS. A phosphoserine mark is found at Ser-297, Ser-300, and Ser-304. Over residues 315–331 the composition is skewed to basic and acidic residues; the sequence is MRRESGRPIKPPRKDLP. In terms of domain architecture, Bromo 2 spans 343-452; sequence GKLSEQLKHC…DVFEFRYAKM (110 aa). A compositionally biased stretch (acidic residues) spans 480–512; it reads SSEESSSESSSEEEEEEEEDEDEEESESSDSEE. Positions 542–564 are enriched in basic residues; that stretch reads KPKRKREKKEKKKKRKAEKHRGR. Residues 553–557 carry the Nuclear localization signal motif; sequence KKKRK. The NET domain maps to 630–712; that stretch reads DSEEEEESRP…SCLRKKPRKP (83 aa). Ser-631 is modified (phosphoserine). Residues 772–792 show a composition bias toward low complexity; that stretch reads SASSSSSDSSSSSSSSSSSDT.

The protein belongs to the BET family. In terms of assembly, homodimer. Interacts with E2F1. Interacts with (acetylated) STAT3; promoting STAT3 recruitment to chromatin. Interacts with CTCF; promoting BRD2 recruitment to chromatin. As to expression, predominantly expressed in the testis, followed by ovary, placenta, embryo and to a lower extent in somatic tissues.

Its subcellular location is the nucleus. It localises to the chromosome. Functionally, chromatin reader protein that specifically recognizes and binds histone H4 acetylated at 'Lys-5' and 'Lys-12' (H4K5ac and H4K12ac, respectively), thereby controlling gene expression and remodeling chromatin structures. Recruits transcription factors and coactivators to target gene sites, and activates RNA polymerase II machinery for transcriptional elongation. Plays a key role in genome compartmentalization via its association with CTCF and cohesin: recruited to chromatin by CTCF and promotes formation of topologically associating domains (TADs) via its ability to bind acetylated histones, contributing to CTCF boundary formation and enhancer insulation. Also recognizes and binds acetylated non-histone proteins, such as STAT3. Involved in inflammatory response by regulating differentiation of naive CD4(+) T-cells into T-helper Th17: recognizes and binds STAT3 acetylated at 'Lys-87', promoting STAT3 recruitment to chromatin. In addition to acetylated lysines, also recognizes and binds lysine residues on histones that are both methylated and acetylated on the same side chain to form N6-acetyl-N6-methyllysine (Kacme), an epigenetic mark of active chromatin associated with increased transcriptional initiation. Specifically binds histone H4 acetyl-methylated at 'Lys-5' and 'Lys-12' (H4K5acme and H4K12acme, respectively). The sequence is that of Bromodomain-containing protein 2 from Mus musculus (Mouse).